A 930-amino-acid chain; its full sequence is Type I restriction enzyme SsaAORF53P endonuclease subunit (930 aa).

A Helicase ATP-binding domain is found at 254–418 (HQATETSNNG…DGRSTADIFG (165 aa)). 268-274 (TTGSGKT) is an ATP binding site.

Belongs to the HsdR family. The type I restriction/modification system is composed of three polypeptides R, M and S.

The catalysed reaction is Endonucleolytic cleavage of DNA to give random double-stranded fragments with terminal 5'-phosphates, ATP is simultaneously hydrolyzed.. The restriction (R) subunit of a type I restriction enzyme that recognizes an undetermined sequence and cleaves a random distance away. Subunit R is required for both nuclease and ATPase activities, but not for modification. After locating a non-methylated recognition site, the enzyme complex serves as a molecular motor that translocates DNA in an ATP-dependent manner until a collision occurs that triggers cleavage. The sequence is that of Type I restriction enzyme SsaAORF53P endonuclease subunit from Staphylococcus saprophyticus subsp. saprophyticus (strain ATCC 15305 / DSM 20229 / NCIMB 8711 / NCTC 7292 / S-41).